An 85-amino-acid chain; its full sequence is UPF0512 protein R (85 aa).

It belongs to the UPF0512 family.

The polypeptide is UPF0512 protein R (Dictyostelium discoideum (Social amoeba)).